Reading from the N-terminus, the 92-residue chain is MPRSLKKGPFIDLHLLKKVEKAVESGDKKPIRTWSRRSTVFPNMIGLTIAVHNGRQHVPVFVSDEMVGHKLGEFAPTRTYRGHAADKKAKKR.

It belongs to the universal ribosomal protein uS19 family.

Its function is as follows. Protein S19 forms a complex with S13 that binds strongly to the 16S ribosomal RNA. This is Small ribosomal subunit protein uS19 from Yersinia pestis (strain Pestoides F).